Reading from the N-terminus, the 415-residue chain is 4-hydroxy-3-methylbut-2-en-1-yl diphosphate synthase (flavodoxin) (415 aa).

Residues C298, C301, C344, and E351 each contribute to the [4Fe-4S] cluster site.

The protein belongs to the IspG family. [4Fe-4S] cluster serves as cofactor.

It catalyses the reaction (2E)-4-hydroxy-3-methylbut-2-enyl diphosphate + oxidized [flavodoxin] + H2O + 2 H(+) = 2-C-methyl-D-erythritol 2,4-cyclic diphosphate + reduced [flavodoxin]. It functions in the pathway isoprenoid biosynthesis; isopentenyl diphosphate biosynthesis via DXP pathway; isopentenyl diphosphate from 1-deoxy-D-xylulose 5-phosphate: step 5/6. In terms of biological role, converts 2C-methyl-D-erythritol 2,4-cyclodiphosphate (ME-2,4cPP) into 1-hydroxy-2-methyl-2-(E)-butenyl 4-diphosphate. The polypeptide is 4-hydroxy-3-methylbut-2-en-1-yl diphosphate synthase (flavodoxin) (Solibacter usitatus (strain Ellin6076)).